The primary structure comprises 205 residues: Large ribosomal subunit protein uL3c (205 aa).

Residues 130–150 (RGPMSHGSKNHRQPGSIGAGT) are disordered.

It belongs to the universal ribosomal protein uL3 family. As to quaternary structure, part of the 50S ribosomal subunit.

It is found in the plastid. Its subcellular location is the chloroplast. Functionally, one of the primary rRNA binding proteins, it binds directly near the 3'-end of the 23S rRNA, where it nucleates assembly of the 50S subunit. This chain is Large ribosomal subunit protein uL3c (rpl3), found in Gracilaria tenuistipitata var. liui (Red alga).